The sequence spans 434 residues: ATP-dependent RNA helicase SUB2 (434 aa).

Acidic residues predominate over residues 1-16 (MSGEEDLIDYSDDELN). Residues 1-32 (MSGEEDLIDYSDDELNNETTAPASNGKKGDAA) form a disordered region. A Q motif motif is present at residues 50–78 (TGFRDFLLKPELLRAIADCGFEHPSEVQQ). The region spanning 81–256 (IPQAMLGGDI…RKFMQNPTEH (176 aa)) is the Helicase ATP-binding domain. Residue 94–101 (AKSGLGKT) coordinates ATP. The DEAD box motif lies at 203 to 206 (DECD). Positions 268-429 (GLQQYYIPLE…EFPKEGIDAS (162 aa)) constitute a Helicase C-terminal domain.

Belongs to the DEAD box helicase family. DECD subfamily.

The protein resides in the nucleus. The catalysed reaction is ATP + H2O = ADP + phosphate + H(+). In terms of biological role, ATP-binding RNA helicase involved in transcription elongation and required for the export of mRNA out of the nucleus. SUB2 also plays a role in pre-mRNA splicing and spliceosome assembly. May be involved in rDNA and telomeric silencing, and maintenance of genome integrity. The chain is ATP-dependent RNA helicase SUB2 (SUB2) from Chaetomium globosum (strain ATCC 6205 / CBS 148.51 / DSM 1962 / NBRC 6347 / NRRL 1970) (Soil fungus).